A 25-amino-acid chain; its full sequence is Pancreatic triacylglycerol lipase (25 aa).

The cysteines at positions 4 and 10 are disulfide-linked.

Belongs to the AB hydrolase superfamily. Lipase family. Forms a 1:1 stoichiometric complex with (pro)colipase/CLPS.

It localises to the secreted. The enzyme catalyses a triacylglycerol + H2O = a diacylglycerol + a fatty acid + H(+). It catalyses the reaction 1,2,3-tributanoylglycerol + H2O = dibutanoylglycerol + butanoate + H(+). It carries out the reaction 1,2,3-tri-(9Z-octadecenoyl)-glycerol + H2O = di-(9Z)-octadecenoylglycerol + (9Z)-octadecenoate + H(+). The catalysed reaction is all-trans-retinyl hexadecanoate + H2O = all-trans-retinol + hexadecanoate + H(+). The enzyme catalyses 1,2-di-(9Z-octadecenoyl)-glycerol + H2O = (9Z-octadecenoyl)-glycerol + (9Z)-octadecenoate + H(+). With respect to regulation, inhibited by bile salts, is reactivated by (pro)colipase/CLPS. In terms of biological role, plays an important role in fat metabolism. It preferentially splits the esters of long-chain fatty acids at positions 1 and 3, producing mainly 2-monoacylglycerol and free fatty acids, and shows considerably higher activity against insoluble emulsified substrates than against soluble ones. The polypeptide is Pancreatic triacylglycerol lipase (PNLIP) (Felis catus (Cat)).